We begin with the raw amino-acid sequence, 135 residues long: Small ribosomal subunit protein uS9 (135 aa).

The protein belongs to the universal ribosomal protein uS9 family.

The sequence is that of Small ribosomal subunit protein uS9 from Petrotoga mobilis (strain DSM 10674 / SJ95).